A 282-amino-acid polypeptide reads, in one-letter code: Bis(5'-nucleosyl)-tetraphosphatase, symmetrical (282 aa).

Belongs to the Ap4A hydrolase family.

It carries out the reaction P(1),P(4)-bis(5'-adenosyl) tetraphosphate + H2O = 2 ADP + 2 H(+). In terms of biological role, hydrolyzes diadenosine 5',5'''-P1,P4-tetraphosphate to yield ADP. The polypeptide is Bis(5'-nucleosyl)-tetraphosphatase, symmetrical (Salmonella agona (strain SL483)).